A 286-amino-acid polypeptide reads, in one-letter code: Shikimate dehydrogenase (NADP(+)) (286 aa).

Shikimate-binding positions include 20 to 22 and Ser67; that span reads SLS. Residue Lys71 is the Proton acceptor of the active site. Residues Asn92 and Asp107 each contribute to the shikimate site. Residues 131–135 and Ala230 contribute to the NADP(+) site; that span reads GGGGA. Position 232 (Tyr232) interacts with shikimate. An NADP(+)-binding site is contributed by Gly253.

Belongs to the shikimate dehydrogenase family. In terms of assembly, homodimer.

The catalysed reaction is shikimate + NADP(+) = 3-dehydroshikimate + NADPH + H(+). The protein operates within metabolic intermediate biosynthesis; chorismate biosynthesis; chorismate from D-erythrose 4-phosphate and phosphoenolpyruvate: step 4/7. Involved in the biosynthesis of the chorismate, which leads to the biosynthesis of aromatic amino acids. Catalyzes the reversible NADPH linked reduction of 3-dehydroshikimate (DHSA) to yield shikimate (SA). This Lactococcus lactis subsp. cremoris (strain MG1363) protein is Shikimate dehydrogenase (NADP(+)).